The following is a 461-amino-acid chain: D-phenylhydantoinase (461 aa).

A divalent metal cation is bound by residues histidine 59, histidine 61, and lysine 151. Lysine 151 is subject to N6-carboxylysine. Tyrosine 156 is a binding site for substrate. A divalent metal cation contacts are provided by histidine 182 and histidine 239. Serine 286 contributes to the substrate binding site. Aspartate 313 lines the a divalent metal cation pocket. Asparagine 335 contacts substrate.

This sequence belongs to the metallo-dependent hydrolases superfamily. Hydantoinase/dihydropyrimidinase family. Homotetramer. The cofactor is a divalent metal cation. In terms of processing, carboxylation allows a single lysine to coordinate two divalent metal cations.

The catalysed reaction is D-5-phenylhydantoin + H2O = N-carbamoyl-D-phenylglycine + H(+). Its function is as follows. Catalyzes the stereospecific hydrolysis of the cyclic amide bond of D-hydantoin derivatives with an aromatic side chains at the 5'-position. Has no activity on dihydropyrimidines. The physiological function is unknown. The sequence is that of D-phenylhydantoinase from Escherichia coli O6:K15:H31 (strain 536 / UPEC).